Reading from the N-terminus, the 99-residue chain is Protein translation factor SUI1 homolog (99 aa).

It belongs to the SUI1 family.

The polypeptide is Protein translation factor SUI1 homolog (Picrophilus torridus (strain ATCC 700027 / DSM 9790 / JCM 10055 / NBRC 100828 / KAW 2/3)).